Here is a 142-residue protein sequence, read N- to C-terminus: Large ribosomal subunit protein uL13 (142 aa).

This sequence belongs to the universal ribosomal protein uL13 family. Part of the 50S ribosomal subunit.

This protein is one of the early assembly proteins of the 50S ribosomal subunit, although it is not seen to bind rRNA by itself. It is important during the early stages of 50S assembly. The chain is Large ribosomal subunit protein uL13 from Coxiella burnetii (strain CbuK_Q154) (Coxiella burnetii (strain Q154)).